The chain runs to 329 residues: ANRNEKLDFLGEGQFATVYKARDKNTNQIVAIKKIKLGHRSEAKDGINRTALREIKLLQELSHPNIIGLLDAFGHKSNISLVFDFMETDLEVIIKDNSLVLTPSHIKAYMLMTLQGLEYLHQHWILHRDLKPNNLLLDENGVLKLADFGLAKSFGSPNWAYTHQVVTRWYRAPELLFGARMYGVGVDMWAVGCILAELLLRVPFLPGDSDLDQLTRIFETLGTPTEEQWPDMCSLPDYVTFKSFPGIPLQHIFIAAGDDLLELIQGLFLFNPCTRITASQALRTKYFSNRPGPTPGCQLPRPNCPVEALKEQSNPAMATKRKRAEALEQ.

Residues 4-287 (NEKLDFLGEG…ASQALRTKYF (284 aa)) form the Protein kinase domain. ATP-binding positions include 10–18 (LGEGQFATV) and Lys33. Catalysis depends on Asp129, which acts as the Proton acceptor. Ser156 carries the phosphoserine; by CDK1 and CDK2 modification. Thr162 carries the post-translational modification Phosphothreonine. A disordered region spans residues 309-329 (LKEQSNPAMATKRKRAEALEQ). At Ser313 the chain carries Phosphoserine.

This sequence belongs to the protein kinase superfamily. CMGC Ser/Thr protein kinase family. CDC2/CDKX subfamily. Associates primarily with cyclin-H (CCNH) and MAT1 to form the CAK complex. CAK can further associate with the core-TFIIH to form the TFIIH basal transcription factor; this complex is sensitive to UV light. The CAK complex binds to p53/TP53 in response to DNA damage. Interacts with CDK2, SF1/NR5A1, PUF60 and PRKCI. Interacts with HINT1. Phosphorylation of Ser-156 during mitosis inactivates the enzyme. Phosphorylation of Thr-162 is required for activity. Phosphorylated at Ser-156 and Thr-162 by CDK2.

The protein resides in the nucleus. It is found in the cytoplasm. The protein localises to the perinuclear region. The enzyme catalyses L-seryl-[protein] + ATP = O-phospho-L-seryl-[protein] + ADP + H(+). It carries out the reaction L-threonyl-[protein] + ATP = O-phospho-L-threonyl-[protein] + ADP + H(+). It catalyses the reaction [DNA-directed RNA polymerase] + ATP = phospho-[DNA-directed RNA polymerase] + ADP + H(+). Its activity is regulated as follows. Phosphorylation at Thr-162 is required for enzymatic activity. The association of p53/TP53 to the CAK complex in response to DNA damage reduces kinase activity toward CDK2 and RNA polymerase II repetitive C-terminal domain (CTD), thus stopping cell cycle progression. Serine/threonine kinase involved in cell cycle control and in RNA polymerase II-mediated RNA transcription. Cyclin-dependent kinases (CDKs) are activated by the binding to a cyclin and mediate the progression through the cell cycle. Each different complex controls a specific transition between 2 subsequent phases in the cell cycle. Required for both activation and complex formation of CDK1/cyclin-B during G2-M transition, and for activation of CDK2/cyclins during G1-S transition (but not complex formation). CDK7 is the catalytic subunit of the CDK-activating kinase (CAK) complex. Phosphorylates SPT5/SUPT5H, SF1/NR5A1, POLR2A, p53/TP53, CDK1, CDK2, CDK4, CDK6 and CDK11B/CDK11. Initiates transcription by RNA polymerase II by mediating phosphorylation of POLR2A at 'Ser-5' of the repetitive C-terminal domain (CTD) when POLR2A is in complex with DNA, promoting dissociation from DNA and initiation. CAK activates the cyclin-associated kinases CDK1, CDK2, CDK4 and CDK6 by threonine phosphorylation, thus regulating cell cycle progression. CAK complexed to the core-TFIIH basal transcription factor activates RNA polymerase II by serine phosphorylation of the CTD of POLR2A, allowing its escape from the promoter and elongation of the transcripts. Its expression and activity are constant throughout the cell cycle. Upon DNA damage, triggers p53/TP53 activation by phosphorylation, but is inactivated in turn by p53/TP53; this feedback loop may lead to an arrest of the cell cycle and of the transcription, helping in cell recovery, or to apoptosis. Required for DNA-bound peptides-mediated transcription and cellular growth inhibition. The polypeptide is Cyclin-dependent kinase 7 (Cdk7) (Rattus norvegicus (Rat)).